The primary structure comprises 62 residues: MNISWEMILPLIVLQLALAVFALISCIKEERTNGPKWMWAAIIVCINIIGPILFFTVGRKQR.

Transmembrane regions (helical) follow at residues 7-27 and 37-57; these read MILP…ISCI and WMWA…FFTV.

The protein resides in the cell membrane. In terms of biological role, together with YxlD is important for negative regulation of sigma Y activity. This chain is Negative regulatory protein YxlE (yxlE), found in Bacillus subtilis (strain 168).